The primary structure comprises 809 residues: Ribonuclease Z 1 (809 aa).

The tract at residues 74–93 is disordered; sequence ISSPDTYDSSSSSSTTSVSD.

The protein belongs to the RNase Z family. Requires Zn(2+) as cofactor.

It localises to the nucleus. Its subcellular location is the cytoplasm. The enzyme catalyses Endonucleolytic cleavage of RNA, removing extra 3' nucleotides from tRNA precursor, generating 3' termini of tRNAs. A 3'-hydroxy group is left at the tRNA terminus and a 5'-phosphoryl group is left at the trailer molecule.. In terms of biological role, zinc phosphodiesterase, which displays some tRNA 3'-processing endonuclease activity. May be involved in tRNA maturation, by removing a 3'-trailer from precursor tRNA. This Schizosaccharomyces pombe (strain 972 / ATCC 24843) (Fission yeast) protein is Ribonuclease Z 1 (trz1).